A 412-amino-acid polypeptide reads, in one-letter code: Alanyl-tRNA editing protein Aarsd1 (412 aa).

2 residues coordinate Zn(2+): His109 and His113. Position 174 is a phosphoserine (Ser174). Cys209 and His213 together coordinate Zn(2+).

This sequence belongs to the class-II aminoacyl-tRNA synthetase family. Alax-L subfamily. Requires Zn(2+) as cofactor.

It is found in the cytoplasm. Functionally, functions in trans to edit the amino acid moiety from incorrectly charged tRNA(Ala). The sequence is that of Alanyl-tRNA editing protein Aarsd1 (AARSD1) from Homo sapiens (Human).